The primary structure comprises 341 residues: Phenylalanine--tRNA ligase alpha subunit (341 aa).

Glu259 contacts Mg(2+).

The protein belongs to the class-II aminoacyl-tRNA synthetase family. Phe-tRNA synthetase alpha subunit type 1 subfamily. In terms of assembly, tetramer of two alpha and two beta subunits. Mg(2+) is required as a cofactor.

Its subcellular location is the cytoplasm. The enzyme catalyses tRNA(Phe) + L-phenylalanine + ATP = L-phenylalanyl-tRNA(Phe) + AMP + diphosphate + H(+). This chain is Phenylalanine--tRNA ligase alpha subunit, found in Mycobacterium tuberculosis (strain ATCC 25177 / H37Ra).